A 151-amino-acid chain; its full sequence is Ribosome maturation factor RimP (151 aa).

It belongs to the RimP family.

It is found in the cytoplasm. Required for maturation of 30S ribosomal subunits. This is Ribosome maturation factor RimP from Hydrogenovibrio crunogenus (strain DSM 25203 / XCL-2) (Thiomicrospira crunogena).